Reading from the N-terminus, the 370-residue chain is Anhydro-N-acetylmuramic acid kinase (370 aa).

12–19 (GTSLDGVD) lines the ATP pocket.

This sequence belongs to the anhydro-N-acetylmuramic acid kinase family.

It catalyses the reaction 1,6-anhydro-N-acetyl-beta-muramate + ATP + H2O = N-acetyl-D-muramate 6-phosphate + ADP + H(+). The protein operates within amino-sugar metabolism; 1,6-anhydro-N-acetylmuramate degradation. It functions in the pathway cell wall biogenesis; peptidoglycan recycling. Catalyzes the specific phosphorylation of 1,6-anhydro-N-acetylmuramic acid (anhMurNAc) with the simultaneous cleavage of the 1,6-anhydro ring, generating MurNAc-6-P. Is required for the utilization of anhMurNAc either imported from the medium or derived from its own cell wall murein, and thus plays a role in cell wall recycling. The protein is Anhydro-N-acetylmuramic acid kinase of Yersinia pseudotuberculosis serotype O:1b (strain IP 31758).